The following is a 235-amino-acid chain: Ribonuclease 3 (235 aa).

The RNase III domain maps to Ile6–Gly131. Mg(2+) is bound at residue Glu44. Asp48 is an active-site residue. Residues Asp117 and Glu120 each contribute to the Mg(2+) site. Residue Glu120 is part of the active site. The DRBM domain maps to Asp156–Ile225.

Belongs to the ribonuclease III family. As to quaternary structure, homodimer. Requires Mg(2+) as cofactor.

It is found in the cytoplasm. The catalysed reaction is Endonucleolytic cleavage to 5'-phosphomonoester.. Digests double-stranded RNA. Involved in the processing of primary rRNA transcript to yield the immediate precursors to the large and small rRNAs (23S and 16S). Processes some mRNAs, and tRNAs when they are encoded in the rRNA operon. Processes pre-crRNA and tracrRNA of type II CRISPR loci if present in the organism. The sequence is that of Ribonuclease 3 from Bartonella henselae (strain ATCC 49882 / DSM 28221 / CCUG 30454 / Houston 1) (Rochalimaea henselae).